The following is a 1270-amino-acid chain: Vigilin (1270 aa).

Over residues 1–11 (MSSVAVLTQES) the composition is skewed to polar residues. Disordered regions lie at residues 1 to 23 (MSSV…TQQQ) and 28 to 47 (ALNS…FPPL). 11 consecutive KH domains span residues 150–188 (ASAT…IPRP), 219–260 (DKRA…IPPP), 291–333 (KKKT…IPPT), 360–402 (ANSF…EFTE), 431–473 (INRT…IPPD), 504–545 (ENER…NFPD), 577–619 (VENS…LPGR), 651–693 (ANIT…FPTE), 724–766 (QTKS…FPTS), 798–840 (DNVV…LPTV), and 872–913 (EAQV…FPDR). A disordered region spans residues 911–947 (PDREENPAPVAEPALQENGEEGGEGKDGKDADPSSPR). The segment covering 933–947 (GEGKDGKDADPSSPR) has biased composition (basic and acidic residues). KH domains are found at residues 970–1012 (ALVP…VPAP), 1051–1093 (ALRS…FPDK), and 1126–1168 (LEQM…FPQS). The segment at 1217-1270 (SHEESKVPSKGFVVRDAPCGTVNNEKAPDMSSSEDFPSFGAQVAPKTLPWGPKR) is disordered.

Its subcellular location is the cytoplasm. This chain is Vigilin (HDLBP), found in Gallus gallus (Chicken).